Here is a 183-residue protein sequence, read N- to C-terminus: Glutathione-regulated potassium-efflux system ancillary protein KefG (183 aa).

It belongs to the NAD(P)H dehydrogenase (quinone) family. KefG subfamily. Interacts with KefB.

The protein resides in the cell inner membrane. It catalyses the reaction a quinone + NADH + H(+) = a quinol + NAD(+). The catalysed reaction is a quinone + NADPH + H(+) = a quinol + NADP(+). Its function is as follows. Regulatory subunit of a potassium efflux system that confers protection against electrophiles. Required for full activity of KefB. In Enterobacter sp. (strain 638), this protein is Glutathione-regulated potassium-efflux system ancillary protein KefG.